We begin with the raw amino-acid sequence, 226 residues long: Probable peroxiredoxin prdx-3 (226 aa).

A Thioredoxin domain is found at 33–191; it reads LGPKNTVPAF…TLRVLKAFQF (159 aa). Residue Cys-78 is the Cysteine sulfenic acid (-SOH) intermediate of the active site.

This sequence belongs to the peroxiredoxin family. AhpC/Prx1 subfamily. In terms of assembly, homodimer; disulfide-linked, upon oxidation.

The catalysed reaction is a hydroperoxide + [thioredoxin]-dithiol = an alcohol + [thioredoxin]-disulfide + H2O. Its function is as follows. Thiol-specific peroxidase that catalyzes the reduction of hydrogen peroxide and organic hydroperoxides to water and alcohols, respectively. Plays a role in cell protection against oxidative stress by detoxifying peroxides and as sensor of hydrogen peroxide-mediated signaling events. The chain is Probable peroxiredoxin prdx-3 (prdx-3) from Caenorhabditis elegans.